A 273-amino-acid chain; its full sequence is WIMGHMVNAVYQIDEFVNLGANSIETDVSFDDNANPEYTYHGIPCDCGRSCLKWENCNDFLKGLRSATTPGNSKYQSKLILVVFDLKTGSLYDNQASEAGKKLAKNLLKHYWNNGNNGGRAYIVLSIPDLNHYPLIKGFTDTLKQEGHPELLEKVGYDFSGNDAVGDVAKAYKKAGVSGHVWQSDGITNCLLRGLTRVKEAVANRDSGNGYINKVYYWTVDKRATTRDALDAGVDGVMTNYPDVIADVMNEAAYKNKVRLATYEDSPWVTFKK.

The active site involves His5. Glu25 and Asp27 together coordinate Mg(2+). Catalysis depends on His41, which acts as the Nucleophile. 2 disulfides stabilise this stretch: Cys45–Cys51 and Cys47–Cys190. Asp85 lines the Mg(2+) pocket.

It belongs to the arthropod phospholipase D family. Class II subfamily. Mg(2+) serves as cofactor. As to expression, expressed by the venom gland.

Its subcellular location is the secreted. The enzyme catalyses an N-(acyl)-sphingosylphosphocholine = an N-(acyl)-sphingosyl-1,3-cyclic phosphate + choline. It carries out the reaction an N-(acyl)-sphingosylphosphoethanolamine = an N-(acyl)-sphingosyl-1,3-cyclic phosphate + ethanolamine. The catalysed reaction is a 1-acyl-sn-glycero-3-phosphocholine = a 1-acyl-sn-glycero-2,3-cyclic phosphate + choline. It catalyses the reaction a 1-acyl-sn-glycero-3-phosphoethanolamine = a 1-acyl-sn-glycero-2,3-cyclic phosphate + ethanolamine. Dermonecrotic toxins cleave the phosphodiester linkage between the phosphate and headgroup of certain phospholipids (sphingolipid and lysolipid substrates), forming an alcohol (often choline) and a cyclic phosphate. This toxin acts on sphingomyelin (SM). It may also act on ceramide phosphoethanolamine (CPE), lysophosphatidylcholine (LPC) and lysophosphatidylethanolamine (LPE), but not on lysophosphatidylserine (LPS), and lysophosphatidylglycerol (LPG). It acts by transphosphatidylation, releasing exclusively cyclic phosphate products as second products. Induces dermonecrosis, hemolysis, increased vascular permeability, edema, inflammatory response, and platelet aggregation. The protein is Dermonecrotic toxin LhSicTox-alphaIA2aviii of Loxosceles hirsuta (Recluse spider).